We begin with the raw amino-acid sequence, 262 residues long: Triosephosphate isomerase (262 aa).

13–15 is a binding site for substrate; it reads NWK. Catalysis depends on H103, which acts as the Electrophile. E175 (proton acceptor) is an active-site residue. Residues G181, S221, and 242–243 each bind substrate; that span reads GG.

Belongs to the triosephosphate isomerase family. As to quaternary structure, homodimer.

The protein localises to the cytoplasm. It carries out the reaction D-glyceraldehyde 3-phosphate = dihydroxyacetone phosphate. Its pathway is carbohydrate biosynthesis; gluconeogenesis. It participates in carbohydrate degradation; glycolysis; D-glyceraldehyde 3-phosphate from glycerone phosphate: step 1/1. In terms of biological role, involved in the gluconeogenesis. Catalyzes stereospecifically the conversion of dihydroxyacetone phosphate (DHAP) to D-glyceraldehyde-3-phosphate (G3P). The protein is Triosephosphate isomerase of Corynebacterium efficiens (strain DSM 44549 / YS-314 / AJ 12310 / JCM 11189 / NBRC 100395).